The primary structure comprises 544 residues: Cytochrome P450 monooxygenase tenB (544 aa).

The chain crosses the membrane as a helical span at residues 13–33 (LGYYEKVTGILGVVSIILLFW). Basic and acidic residues predominate over residues 438 to 448 (FDPFRFSRASK). Residues 438-467 (FDPFRFSRASKDDDDDDDDDGRSTSSHTKD) are disordered. Cys486 is a binding site for heme.

It belongs to the cytochrome P450 family. Heme serves as cofactor.

The protein localises to the membrane. The protein operates within secondary metabolite biosynthesis. Functionally, cytochrome P450 monooxygenase; part of the gene cluster that mediates the biosynthesis of tenellin-type 2-pyridones, iron-chelating compounds involved in iron stress tolerance, competition with the natural competitor fungus Metarhizium robertsii and insect hosts infection. TenB catalyzes the selective N-hydroxylation of the 2-pyridone nitrogen of yield tellinin and 15-hydroxytellenin (15-HT), respectively. The pathway begins with the assembly of the polyketide-amino acid backbone by the hybrid PKS-NRPS tenS with the help of the enoyl reductase tenC. These enzymes catalyze the synthesis of the pyrrolidine-2-dione intermediates pretellinin A, 11-hydropretellenin A, 12-hydropretellenin A, 13-hydropretellenin A, 14-hydropretellenin A, 12-oxopretellenin A and prototellinin D. The cytochrome P450 monooxygenase tenA then catalyzes an oxidative ring expansion of pretenellin A and 14-hydropretellenin A to form the 2-pyridone core, leading to pretenellin B and pyridovericin, respectively. The cytochrome P450 monooxygenase tenB is then required for the selective N-hydroxylation of the 2-pyridone nitrogen of yield tellinin and 15-hydroxytellenin (15-HT), respectively. The UDP-glucosyltransferase GT1 and the methyltransferase MT1, located outside the tenS gene cluster, contribute to the stepwise glycosylation and methylation of 15-HT to obtain the glycoside pyridovericin-N-O-(4-O-methyl-beta-D-glucopyranoside) (PMGP). Additional related compounds such as 1-O-methyl-15-HT, (8Z)-1-O-methyl-15-HT, and O-methyltenellin A are also produced but the enzymes involved in their biosynthesis have still to be determined. The sequence is that of Cytochrome P450 monooxygenase tenB from Beauveria bassiana (strain ARSEF 2860) (White muscardine disease fungus).